Here is a 340-residue protein sequence, read N- to C-terminus: Mitotic checkpoint protein BUB3.1 (340 aa).

A disordered region spans residues 1 to 20 (MTTVTPSAGRELSNPPSDGI). WD repeat units follow at residues 15–54 (PPSD…LKGE), 96–135 (THDK…GPER), 142–179 (LQPE…QPEQ), 239–278 (DIVY…RLYQ), and 281–324 (KYPT…RSVN).

Belongs to the WD repeat BUB3 family. Part of the mitotic checkpoint complex (MCC); interacts with CDC20-1 and CDC20-2. Interacts with MAD2 and BUBR1. Expressed in actively dividing tissues, early in organ development, in young leaves, lateral root primordia and root meristems, flower buds, flowers and siliques.

It localises to the nucleus. The protein localises to the chromosome. Its subcellular location is the centromere. It is found in the kinetochore. The protein resides in the cytoplasm. It localises to the cytoskeleton. The protein localises to the phragmoplast. Its subcellular location is the spindle. Functionally, has a dual function in spindle-assembly checkpoint signaling and in promoting the establishment of correct kinetochore-microtubule (K-MT) attachments. Promotes the formation of stable end-on bipolar attachments. Necessary for kinetochore localization of BUB1. The BUB1/BUB3 complex plays a role in the inhibition of anaphase-promoting complex or cyclosome (APC/C) when spindle-assembly checkpoint is activated and inhibits the ubiquitin ligase activity of APC/C by phosphorylating its activator CDC20. Essential for gametophyte development. This chain is Mitotic checkpoint protein BUB3.1 (BUB3.1), found in Arabidopsis thaliana (Mouse-ear cress).